The sequence spans 245 residues: Probable phosphatase YcdX (245 aa).

Histidine 7, histidine 9, histidine 15, histidine 40, glutamate 73, histidine 101, histidine 131, aspartate 192, and histidine 194 together coordinate Zn(2+).

The protein belongs to the PHP family. As to quaternary structure, homotrimer. Requires Zn(2+) as cofactor.

In Shigella flexneri serotype 5b (strain 8401), this protein is Probable phosphatase YcdX.